Here is a 64-residue protein sequence, read N- to C-terminus: Conotoxin Leo-T1 (64 aa).

Positions Met1–Ala22 are cleaved as a signal peptide. The propeptide occupies Gln23–Asp48.

Belongs to the conotoxin T superfamily. Contains 2 disulfide bonds that can be either 'C1-C3, C2-C4' or 'C1-C4, C2-C3', since these disulfide connectivities have been observed for conotoxins with cysteine framework V (for examples, see AC P0DQQ7 and AC P81755). As to expression, expressed by the venom duct.

It is found in the secreted. This is Conotoxin Leo-T1 from Conus leopardus (Leopard cone).